The chain runs to 461 residues: Glycine--tRNA ligase (461 aa).

Substrate contacts are provided by R100 and E163. Residues 195 to 197, 205 to 210, 282 to 283, and 326 to 329 each bind ATP; these read RNE, FRTREF, EL, and GLGR. 210 to 214 contributes to the substrate binding site; the sequence is FEQME. 322–326 is a binding site for substrate; that stretch reads EPAAG.

This sequence belongs to the class-II aminoacyl-tRNA synthetase family. In terms of assembly, homodimer.

It is found in the cytoplasm. It carries out the reaction tRNA(Gly) + glycine + ATP = glycyl-tRNA(Gly) + AMP + diphosphate. Its function is as follows. Catalyzes the attachment of glycine to tRNA(Gly). This Corynebacterium efficiens (strain DSM 44549 / YS-314 / AJ 12310 / JCM 11189 / NBRC 100395) protein is Glycine--tRNA ligase.